A 271-amino-acid chain; its full sequence is Solute carrier family 66 member 2 (271 aa).

3 helical membrane-spanning segments follow: residues 8–28, 49–69, and 76–96; these read WLLV…MVFG, FSTY…LFWF, and PLLW…KLCT. The region spanning 14–80 is the PQ-loop 1 domain; sequence HQLVSWGAAA…RRFESPLLWQ (67 aa). A Phosphoserine modification is found at S110. 3 helical membrane passes run 145–165, 168–188, and 232–252; these read DYVQ…YLSI, ALFV…LGVP, and VCGL…YAFA. One can recognise a PQ-loop 2 domain in the interval 178 to 233; that stretch reads AVLTEAMLGVPQLYRNHRHQSTEGMSIKMVLMWTSGDAFKTAYFLLKGAPLQFSVC.

Its subcellular location is the membrane. This Homo sapiens (Human) protein is Solute carrier family 66 member 2.